We begin with the raw amino-acid sequence, 1062 residues long: Carbamoyl phosphate synthase large chain (1062 aa).

The carboxyphosphate synthetic domain stretch occupies residues 1 to 401; the sequence is MPKRTDIHKI…AMQKAVQSLE (401 aa). ATP is bound by residues arginine 129, arginine 169, glycine 175, glycine 176, lysine 208, isoleucine 210, glutamate 215, glycine 241, isoleucine 242, histidine 243, glutamine 284, and glutamate 298. One can recognise an ATP-grasp 1 domain in the interval 133 to 327; the sequence is KELCQKLGEP…IAKMAAKIAI (195 aa). Mg(2+) contacts are provided by glutamine 284, glutamate 298, and asparagine 300. The Mn(2+) site is built by glutamine 284, glutamate 298, and asparagine 300. Residues 402 to 546 are oligomerization domain; it reads IDEKDLYSAK…YSTYDGENES (145 aa). A carbamoyl phosphate synthetic domain region spans residues 547-929; that stretch reads RKSGKKSVIV…ALYKAFAGAK (383 aa). An ATP-grasp 2 domain is found at 671 to 861; sequence DQIIKSLHLH…MAQVATRVIM (191 aa). The ATP site is built by arginine 707, aspartate 746, leucine 748, glutamate 752, glycine 777, valine 778, histidine 779, serine 780, glutamine 820, and glutamate 832. 3 residues coordinate Mg(2+): glutamine 820, glutamate 832, and asparagine 834. Residues glutamine 820, glutamate 832, and asparagine 834 each coordinate Mn(2+). Residues 930–1062 enclose the MGS-like domain; sequence MQLPENGNVL…NRSFATDALK (133 aa). The tract at residues 930-1062 is allosteric domain; it reads MQLPENGNVL…NRSFATDALK (133 aa).

Belongs to the CarB family. As to quaternary structure, composed of two chains; the small (or glutamine) chain promotes the hydrolysis of glutamine to ammonia, which is used by the large (or ammonia) chain to synthesize carbamoyl phosphate. Tetramer of heterodimers (alpha,beta)4. Mg(2+) serves as cofactor. The cofactor is Mn(2+).

The catalysed reaction is hydrogencarbonate + L-glutamine + 2 ATP + H2O = carbamoyl phosphate + L-glutamate + 2 ADP + phosphate + 2 H(+). It catalyses the reaction hydrogencarbonate + NH4(+) + 2 ATP = carbamoyl phosphate + 2 ADP + phosphate + 2 H(+). The protein operates within amino-acid biosynthesis; L-arginine biosynthesis; carbamoyl phosphate from bicarbonate: step 1/1. Its pathway is pyrimidine metabolism; UMP biosynthesis via de novo pathway; (S)-dihydroorotate from bicarbonate: step 1/3. Its function is as follows. Large subunit of the glutamine-dependent carbamoyl phosphate synthetase (CPSase). CPSase catalyzes the formation of carbamoyl phosphate from the ammonia moiety of glutamine, carbonate, and phosphate donated by ATP, constituting the first step of 2 biosynthetic pathways, one leading to arginine and/or urea and the other to pyrimidine nucleotides. The large subunit (synthetase) binds the substrates ammonia (free or transferred from glutamine from the small subunit), hydrogencarbonate and ATP and carries out an ATP-coupled ligase reaction, activating hydrogencarbonate by forming carboxy phosphate which reacts with ammonia to form carbamoyl phosphate. In Lactobacillus delbrueckii subsp. bulgaricus (strain ATCC BAA-365 / Lb-18), this protein is Carbamoyl phosphate synthase large chain.